The sequence spans 218 residues: MTTRNDVAQMIDHTLLKPEATTDDFKALIADAVRLGTYSVCVSPSALPVEVPENLHVATVVGFPSGAVKPEIKAAEAARTVADGAEEVDMVINIALAKEGKFDELEAEIKAVRDAVPAPGILKVILETAALTDDEIVAACKASENAGADFVKTSTGFHPAGGASVHAVEIMHATVGGRLGIKASGGIRTAKDALAMIEAGATRLGLSASAAILEELGE.

The active-site Proton donor/acceptor is the aspartate 89. The active-site Schiff-base intermediate with acetaldehyde is the lysine 152. Residue lysine 182 is the Proton donor/acceptor of the active site.

This sequence belongs to the DeoC/FbaB aldolase family. DeoC type 1 subfamily.

The protein resides in the cytoplasm. It catalyses the reaction 2-deoxy-D-ribose 5-phosphate = D-glyceraldehyde 3-phosphate + acetaldehyde. It functions in the pathway carbohydrate degradation; 2-deoxy-D-ribose 1-phosphate degradation; D-glyceraldehyde 3-phosphate and acetaldehyde from 2-deoxy-alpha-D-ribose 1-phosphate: step 2/2. Its function is as follows. Catalyzes a reversible aldol reaction between acetaldehyde and D-glyceraldehyde 3-phosphate to generate 2-deoxy-D-ribose 5-phosphate. The sequence is that of Deoxyribose-phosphate aldolase from Corynebacterium diphtheriae (strain ATCC 700971 / NCTC 13129 / Biotype gravis).